The sequence spans 206 residues: Urease accessory protein UreG (206 aa).

Position 15–22 (15–22 (GPVGSGKT)) interacts with GTP.

It belongs to the SIMIBI class G3E GTPase family. UreG subfamily. In terms of assembly, homodimer. UreD, UreF and UreG form a complex that acts as a GTP-hydrolysis-dependent molecular chaperone, activating the urease apoprotein by helping to assemble the nickel containing metallocenter of UreC. The UreE protein probably delivers the nickel.

The protein resides in the cytoplasm. In terms of biological role, facilitates the functional incorporation of the urease nickel metallocenter. This process requires GTP hydrolysis, probably effectuated by UreG. The sequence is that of Urease accessory protein UreG from Ralstonia pickettii (strain 12J).